The following is a 233-amino-acid chain: Rano class II histocompatibility antigen, A beta chain (233 aa).

Positions 1-80 (DFVYQFKGLC…DTVCRYNYEE (80 aa)) are beta-1. Residues 1-194 (DFVYQFKGLC…RAQSESAQSK (194 aa)) are Extracellular-facing. An N-linked (GlcNAc...) asparagine glycan is attached at Asn14. A beta-2 region spans residues 81–184 (TEVPTSLRRL…SLESPVTVEW (104 aa)). One can recognise an Ig-like C1-type domain in the interval 93–181 (PNVAISLSRT…DHASLESPVT (89 aa)). The segment at 185–194 (RAQSESAQSK) is connecting peptide. The chain crosses the membrane as a helical span at residues 195-215 (MLSGIGGLVLGVIFLGLGLFI). At 216 to 233 (RHKRQKGPQGPPPAGLLQ) the chain is on the cytoplasmic side.

This sequence belongs to the MHC class II family.

It is found in the membrane. Its function is as follows. Involved in the presentation of foreign antigens to the immune system. The polypeptide is Rano class II histocompatibility antigen, A beta chain (RT1-B) (Rattus norvegicus (Rat)).